The sequence spans 90 residues: MFGLGRPQPTSAEKIAAVENELKVVAEMHSRMVKICTLKCIDKSYREGDLSKGESVCLDRCAAKFFETHQKISDQLQKETQARGGGGFGM.

The short motif at 36 to 61 is the Twin CX3C motif element; the sequence is CTLKCIDKSYREGDLSKGESVCLDRC. Cystine bridges form between cysteine 36–cysteine 61 and cysteine 40–cysteine 57.

The protein belongs to the small Tim family. As to quaternary structure, heterohexamer; composed of 3 copies of tim9 and 3 copies of tim10, named soluble 70 kDa complex. Associates directly with the TIM22 complex, whose core is composed of tim22 and tim54. Interacts with the transmembrane regions of multi-pass transmembrane proteins in transit.

It localises to the mitochondrion inner membrane. In terms of biological role, mitochondrial intermembrane chaperone that participates in the import and insertion of multi-pass transmembrane proteins into the mitochondrial inner membrane. Also required for the transfer of beta-barrel precursors from the TOM complex to the sorting and assembly machinery (SAM complex) of the outer membrane. Acts as a chaperone-like protein that protects the hydrophobic precursors from aggregation and guide them through the mitochondrial intermembrane space. This Neurospora crassa (strain ATCC 24698 / 74-OR23-1A / CBS 708.71 / DSM 1257 / FGSC 987) protein is Mitochondrial import inner membrane translocase subunit tim10 (tim10).